The primary structure comprises 205 residues: Large ribosomal subunit protein uL4 (205 aa).

The tract at residues Arg-44–Ser-79 is disordered.

Belongs to the universal ribosomal protein uL4 family. In terms of assembly, part of the 50S ribosomal subunit.

In terms of biological role, one of the primary rRNA binding proteins, this protein initially binds near the 5'-end of the 23S rRNA. It is important during the early stages of 50S assembly. It makes multiple contacts with different domains of the 23S rRNA in the assembled 50S subunit and ribosome. Forms part of the polypeptide exit tunnel. This chain is Large ribosomal subunit protein uL4, found in Coxiella burnetii (strain RSA 331 / Henzerling II).